The chain runs to 882 residues: Dual specificity tyrosine-phosphorylation-regulated kinase mbk-1 (882 aa).

Over residues 1 to 42 the composition is skewed to polar residues; sequence MNTADVPDNLQSWGQQPSSSYSNTQQHSQMTNLPPINHNNLC. 4 disordered regions span residues 1-45, 62-81, 212-239, and 255-308; these read MNTA…CDTE, QKQQKQQEQQHIQQQNAQRF, KQVRRDRHKSQDAGKPKGSKDGSGASLT, and NHYQ…NGYD. The span at 64–79 shows a compositional bias: low complexity; it reads QQKQQEQQHIQQQNAQ. Basic and acidic residues predominate over residues 220 to 231; the sequence is KSQDAGKPKGSK. Positions 290–308 are enriched in low complexity; sequence QQQQRQKSSRGGPYNNGYD. The 322-residue stretch at 328–649 folds into the Protein kinase domain; it reads ILSDTPVGKG…PYYVVRHPFL (322 aa). ATP contacts are provided by residues 334 to 342 and lysine 357; that span reads VGKGSFGQV. Residue aspartate 456 is the Proton acceptor of the active site. Disordered stretches follow at residues 742–761 and 789–882; these read HNPNYQYSQPQQQQQQQYQQ and QQQQ…NNKL. Low complexity-rich tracts occupy residues 747–761 and 789–810; these read QYSQPQQQQQQQYQQ and QQQQQQRQHMPQAQSSSQQHLQ. Over residues 816–827 the composition is skewed to basic and acidic residues; the sequence is RQQDQNEWRNQF. The span at 843-869 shows a compositional bias: polar residues; it reads SVSNQISRNQFNPQQVSMTHGNVNANN.

Belongs to the protein kinase superfamily. CMGC Ser/Thr protein kinase family. MNB/DYRK subfamily. The cofactor is Mg(2+). As to expression, expressed in all somatic cells.

The protein resides in the nucleus. It catalyses the reaction L-seryl-[protein] + ATP = O-phospho-L-seryl-[protein] + ADP + H(+). The catalysed reaction is L-threonyl-[protein] + ATP = O-phospho-L-threonyl-[protein] + ADP + H(+). The enzyme catalyses L-tyrosyl-[protein] + ATP = O-phospho-L-tyrosyl-[protein] + ADP + H(+). Its function is as follows. Possible role in the function of olfactory neurons. The polypeptide is Dual specificity tyrosine-phosphorylation-regulated kinase mbk-1 (Caenorhabditis elegans).